A 1888-amino-acid chain; its full sequence is Protein mms22 (1888 aa).

3 disordered regions span residues 12–34, 151–258, and 316–354; these read DSQDSGSEWSNTHGSLISQRGNE, FSSD…ISSN, and RRKLHPRSTAKLSSELGNEISDSDNSISTPTPTDDSRFD. Polar residues-rich tracts occupy residues 13–32, 212–227, and 338–348; these read SQDSGSEWSNTHGSLISQRG, SNLNTADNDLALSSTI, and SDNSISTPTPT.

This sequence belongs to the MMS22 family.

It is found in the nucleus. Its function is as follows. Involved in protection against replication-dependent DNA damage. May act by restoring active replication forks, repairing unusual DNA structures, and/or preventing aberrant DNA rearrangement at arrested replication forks. The protein is Protein mms22 (mus7) of Schizosaccharomyces pombe (strain 972 / ATCC 24843) (Fission yeast).